Reading from the N-terminus, the 124-residue chain is Photoactive yellow protein (124 aa).

The PAS domain occupies 22 to 85 (AEYLPFGAVL…GEFLRFHQTG (64 aa)). At cysteine 68 the chain carries S-(4-hydroxycinnamyl)cysteine.

Belongs to the photoactive yellow protein family. Post-translationally, the 4-hydroxycinnamic acid (p-coumaric acid) chromophore is covalently bound via a thioester linkage.

Functionally, this photoactive protein is a photoreceptor with kinetics similar to that of rhodopsin. The chain is Photoactive yellow protein (pyp) from Cereibacter sphaeroides (strain ATCC 17023 / DSM 158 / JCM 6121 / CCUG 31486 / LMG 2827 / NBRC 12203 / NCIMB 8253 / ATH 2.4.1.) (Rhodobacter sphaeroides).